Reading from the N-terminus, the 451-residue chain is Phosphoglucosamine mutase (451 aa).

The Phosphoserine intermediate role is filled by Ser-102. Residues Ser-102, Asp-242, Asp-244, and Asp-246 each coordinate Mg(2+). A Phosphoserine modification is found at Ser-102.

The protein belongs to the phosphohexose mutase family. The cofactor is Mg(2+). Activated by phosphorylation.

The enzyme catalyses alpha-D-glucosamine 1-phosphate = D-glucosamine 6-phosphate. Functionally, catalyzes the conversion of glucosamine-6-phosphate to glucosamine-1-phosphate. The sequence is that of Phosphoglucosamine mutase from Staphylococcus aureus (strain Mu3 / ATCC 700698).